A 392-amino-acid polypeptide reads, in one-letter code: Outer membrane protein assembly factor BamB (392 aa).

A signal peptide spans Met1 to Gly19. A lipid anchor (N-palmitoyl cysteine) is attached at Cys20. Cys20 is lipidated: S-diacylglycerol cysteine.

Belongs to the BamB family. Part of the Bam complex, which is composed of the outer membrane protein BamA, and four lipoproteins BamB, BamC, BamD and BamE. Monomer. Interacts directly with BamA. The Bam complex has the shape of a hat, with the BamA beta-barrel crown in the outer membrane and the periplasmic brim formed by the BamA POTRA domains and the 4 lipoproteins.

The protein localises to the cell outer membrane. Its function is as follows. Part of the outer membrane protein assembly complex (Bam), which is involved in assembly and insertion of beta-barrel proteins into the outer membrane. Nonessential member of the complex, which may orient the flexible periplasmic domain of BamA for interaction with other Bam components, chaperones and nascent outer membrane proteins. Efficient substrate folding and insertion into the outer membrane requires all 5 subunits. A lateral gate may open between the first and last strands of the BamA beta-barrel that allows substrate to insert into the outer membrane; comparison of the structures of complete and nearly complete Bam complexes show there is considerable movement of all 5 proteins. The chain is Outer membrane protein assembly factor BamB from Escherichia coli (strain K12).